The primary structure comprises 238 residues: Isoamyl acetate-hydrolyzing esterase (238 aa).

Serine 12 acts as the Nucleophile in catalysis. Catalysis depends on aspartate 187, which acts as the Proton donor. Histidine 190 (proton acceptor) is an active-site residue.

This sequence belongs to the 'GDSL' lipolytic enzyme family. IAH1 subfamily. In terms of assembly, homodimer.

It carries out the reaction 3-methylbutyl acetate + H2O = 3-methylbutanol + acetate + H(+). Plays a crucial role in the hydrolysis of isoamyl acetate in sake mash. Hydrolyzes short chain esters from acetate (C2) to hexanoate (C6), showing more specificity for shorter chain exters. No activity for decanoate (C10) esters. The sequence is that of Isoamyl acetate-hydrolyzing esterase from Saccharomyces cerevisiae (strain ATCC 204508 / S288c) (Baker's yeast).